Reading from the N-terminus, the 380-residue chain is Cytochrome b (380 aa).

The next 4 helical transmembrane spans lie at 34–54, 78–99, 114–134, and 179–199; these read FGSL…LLAM, WLIR…YLHI, WNTG…GYVL, and FFAL…IHLT. Residues His84 and His98 each contribute to the heme b site. His183 and His197 together coordinate heme b. His202 is an a ubiquinone binding site. Transmembrane regions (helical) follow at residues 227-247, 289-309, 321-341, and 348-368; these read TKDI…ALFS, LGGV…PLLH, LSQL…WIGS, and FIII…ILFP.

Belongs to the cytochrome b family. The cytochrome bc1 complex contains 11 subunits: 3 respiratory subunits (MT-CYB, CYC1 and UQCRFS1), 2 core proteins (UQCRC1 and UQCRC2) and 6 low-molecular weight proteins (UQCRH/QCR6, UQCRB/QCR7, UQCRQ/QCR8, UQCR10/QCR9, UQCR11/QCR10 and a cleavage product of UQCRFS1). This cytochrome bc1 complex then forms a dimer. It depends on heme b as a cofactor.

It is found in the mitochondrion inner membrane. Component of the ubiquinol-cytochrome c reductase complex (complex III or cytochrome b-c1 complex) that is part of the mitochondrial respiratory chain. The b-c1 complex mediates electron transfer from ubiquinol to cytochrome c. Contributes to the generation of a proton gradient across the mitochondrial membrane that is then used for ATP synthesis. In Pygoscelis antarcticus (Chinstrap penguin), this protein is Cytochrome b (MT-CYB).